Here is a 223-residue protein sequence, read N- to C-terminus: Ribosomal RNA small subunit methyltransferase G (223 aa).

S-adenosyl-L-methionine contacts are provided by residues glycine 84, leucine 89, 135 to 136, and arginine 150; that span reads VE.

This sequence belongs to the methyltransferase superfamily. RNA methyltransferase RsmG family.

It localises to the cytoplasm. It carries out the reaction guanosine(527) in 16S rRNA + S-adenosyl-L-methionine = N(7)-methylguanosine(527) in 16S rRNA + S-adenosyl-L-homocysteine. In terms of biological role, specifically methylates the N7 position of guanine in position 527 of 16S rRNA. This is Ribosomal RNA small subunit methyltransferase G from Saccharophagus degradans (strain 2-40 / ATCC 43961 / DSM 17024).